Consider the following 116-residue polypeptide: Iron-sulfur cluster insertion protein ErpA (116 aa).

The iron-sulfur cluster site is built by C44, C108, and C110.

The protein belongs to the HesB/IscA family. As to quaternary structure, homodimer. It depends on iron-sulfur cluster as a cofactor.

Required for insertion of 4Fe-4S clusters for at least IspG. The sequence is that of Iron-sulfur cluster insertion protein ErpA from Ectopseudomonas mendocina (strain ymp) (Pseudomonas mendocina).